We begin with the raw amino-acid sequence, 291 residues long: Verruculogen synthase (291 aa).

Belongs to the PhyH family. In terms of assembly, homodimer. Fe cation is required as a cofactor.

The catalysed reaction is fumitremorgin B + 2-oxoglutarate + AH2 + 2 O2 = verruculogen + succinate + A + CO2 + H2O. Its pathway is mycotoxin biosynthesis. Verruculogen synthase; part of the gene cluster that mediates the biosynthesis of fumitremorgins, indole alkaloids that carry not only intriguing chemical structures, but also interesting biological and pharmacological activities. The biosynthesis of fumitremorgin-type alkaloids begins by condensation of the two amino acids L-tryptophan and L-proline to brevianamide F, catalyzed by the non-ribosomal peptide synthetase ftmPS/ftmA. Brevianamide F is then prenylated by the prenyltransferase ftmPT1/ftmB in the presence of dimethylallyl diphosphate, resulting in the formation of tryprostatin B. The three cytochrome P450 monooxygenases, ftmP450-1/ftmC, ftmP450-2/ftmE and ftmP450-3/FtmG, are responsible for the conversion of tryprostatin B to 6-hydroxytryprostatin B, tryprostatin A to fumitremorgin C and fumitremorgin C to 12,13-dihydroxyfumitremorgin C, respectively. The putative methyltransferase ftmMT/ftmD is expected for the conversion of 6-hydroxytryprostatin B to tryprostatin A. FtmPT2/FtmH catalyzes the prenylation of 12,13-dihydroxyfumitre-morgin C in the presence of dimethylallyl diphosphate, resulting in the formation of fumitremorgin B. Fumitremorgin B is further converted to verruculogen by ftmOx1/ftmF via the insertion of an endoperoxide bond between the two prenyl moieties. Finally, verruculogen is further converted to fumitremorgin A by the verruculogen prenyltransferase ftmPT3. The polypeptide is Verruculogen synthase (Neosartorya fischeri (strain ATCC 1020 / DSM 3700 / CBS 544.65 / FGSC A1164 / JCM 1740 / NRRL 181 / WB 181) (Aspergillus fischerianus)).